The primary structure comprises 210 residues: MDIVSIALPKGRMTEDAVVLFKKAGISNDVLKDISRKLILEDNKNAIKFMLVKPMDVPTYVEHGAADLGVCGKDILLEQKKDLYEVLDLKFGFCRMVVAGPPNVKDSFLTNKRVATKFPNVAEEFFKKKGENVEIIKLNGSVELAPIVGLSEVIVDIVETGRTLRENGLVVIEEIFPSTARLIVNKASMKTKSERIKDIILKLREVINGG.

Belongs to the ATP phosphoribosyltransferase family. Short subfamily. Heteromultimer composed of HisG and HisZ subunits.

It is found in the cytoplasm. It carries out the reaction 1-(5-phospho-beta-D-ribosyl)-ATP + diphosphate = 5-phospho-alpha-D-ribose 1-diphosphate + ATP. Its pathway is amino-acid biosynthesis; L-histidine biosynthesis; L-histidine from 5-phospho-alpha-D-ribose 1-diphosphate: step 1/9. Catalyzes the condensation of ATP and 5-phosphoribose 1-diphosphate to form N'-(5'-phosphoribosyl)-ATP (PR-ATP). Has a crucial role in the pathway because the rate of histidine biosynthesis seems to be controlled primarily by regulation of HisG enzymatic activity. This Caldanaerobacter subterraneus subsp. tengcongensis (strain DSM 15242 / JCM 11007 / NBRC 100824 / MB4) (Thermoanaerobacter tengcongensis) protein is ATP phosphoribosyltransferase.